A 514-amino-acid chain; its full sequence is Cytochrome bd-II ubiquinol oxidase subunit 1 (514 aa).

The Cytoplasmic portion of the chain corresponds to 1–22 (MWDVIDLSRWQFALTALYHFLF). Histidine 19 is a heme binding site. A helical transmembrane segment spans residues 23 to 42 (VPLTLGLIFLLAIMETIYVV). Topologically, residues 43-94 (TGKTIYRDMTRFWGKLFGINFALGVATGLTMEFQFGTNWSFYSNYVGDIFGA) are periplasmic. The helical transmembrane segment at 95 to 114 (PLAMEALMAFFLESTFVGLF) threads the bilayer. The Cytoplasmic portion of the chain corresponds to 115–129 (FFGWQRLNKYQHLLV). A helical membrane pass occupies residues 130–149 (TWLVAFGSNLSALWILNANG). Topologically, residues 150–187 (WMQYPTGAHFDIDTLRMEMTSFSELVFNPVSQVKFVHT) are periplasmic. Histidine 186 provides a ligand contact to heme. A helical membrane pass occupies residues 188–207 (VMAGYVTGAMFIMAISAWYL). Residues 208–219 (LRGRERNVALRS) lie on the Cytoplasmic side of the membrane. Residues 220–239 (FAIGSVFGTLAIIGTLQLGD) traverse the membrane as a helical segment. Residues 240-392 (SSAYEVAQVQ…VAPVFWSFRI (153 aa)) lie on the Periplasmic side of the membrane. Methionine 393 is a heme binding site. A helical membrane pass occupies residues 393 to 412 (MVGCGSLLLLVMLIALVQTL). Topologically, residues 413 to 470 (RGKIDQHRWVLKMALWSLPLPWIAIEAGWFMTEFGRQPWAIQDILPTYSAHSALTTGQ) are cytoplasmic. A helical membrane pass occupies residues 471–490 (LAFSLIMIVGLYTLFLIAEV). Topologically, residues 491 to 514 (YLMQKYARLGPSAMQSEQPTQQQG) are periplasmic.

It belongs to the cytochrome ubiquinol oxidase subunit 1 family. In terms of assembly, heterodimer of subunits I and II. Heme serves as cofactor. The N-terminus is blocked.

Its subcellular location is the cell inner membrane. The catalysed reaction is 2 a ubiquinol + O2 + n H(+)(in) = 2 a ubiquinone + 2 H2O + n H(+)(out). It functions in the pathway energy metabolism; oxidative phosphorylation. Its activity is regulated as follows. Inhibited by cyanide; is more sensitive to cyanide than cytochrome bd-I oxidase. Functionally, a terminal oxidase that catalyzes quinol-dependent, Na(+)-independent oxygen uptake. Prefers menadiol over other quinols although ubiquinol was not tested. Generates a proton motive force using protons and electrons from opposite sides of the membrane to generate H(2)O, transferring 1 proton/electron. This is Cytochrome bd-II ubiquinol oxidase subunit 1 (appC) from Escherichia coli (strain K12).